The following is a 326-amino-acid chain: Vitamin B12 import system permease protein BtuC (326 aa).

9 helical membrane-spanning segments follow: residues 15-35 (WLLCLSVLMLLALLLSLCAGE), 61-81 (LAVLLVGAALAISGAVMQALF), 88-108 (PGLLGVSNGAGVGLIAAVLLG), 112-132 (LPNWALGLCAIAGALIITLIL), 146-166 (LLAGVALGIICSALMTWAIYF), 184-204 (GGVDWRQSWLMLALIPVLLWI), 240-260 (GWMVGVSVALAGAIGFIGLVI), 274-294 (VLLPGCALAGASALLLADVVA), and 302-322 (ELPIGVVTATLGAPVFIWLLL).

Belongs to the binding-protein-dependent transport system permease family. FecCD subfamily. In terms of assembly, the complex is composed of two ATP-binding proteins (BtuD), two transmembrane proteins (BtuC) and a solute-binding protein (BtuF).

The protein resides in the cell inner membrane. Its function is as follows. Part of the ABC transporter complex BtuCDF involved in vitamin B12 import. Involved in the translocation of the substrate across the membrane. The sequence is that of Vitamin B12 import system permease protein BtuC from Escherichia coli O17:K52:H18 (strain UMN026 / ExPEC).